A 172-amino-acid polypeptide reads, in one-letter code: Transcriptional regulator CdrL (172 aa).

The tract at residues 72–113 (SPSAVEEVRTTPASGGRADAEEPGDDGETDAEHADTSATGDE) is disordered. The DZANK-type zinc-finger motif lies at 116 to 160 (CSQCGAELSADHVYCPNCGGKATHRVFCECGDEIRADWAFCPRCG).

This sequence belongs to the CdrL family.

It is found in the cytoplasm. Its function is as follows. Transcriptional regulator involved in the control of cell division. In Halobacterium salinarum (strain ATCC 29341 / DSM 671 / R1), this protein is Transcriptional regulator CdrL.